The chain runs to 150 residues: UPF0506 protein SJCHGC09643 (150 aa).

The first 18 residues, 1–18, serve as a signal peptide directing secretion; sequence MNTCIQLLILCLVTVINS. N-linked (GlcNAc...) asparagine glycosylation is found at Asn20, Asn32, Asn48, and Asn110. 3 disulfide bridges follow: Cys116/Cys130, Cys123/Cys134, and Cys129/Cys139.

The protein belongs to the UPF0506 family.

The protein resides in the secreted. The sequence is that of UPF0506 protein SJCHGC09643 from Schistosoma japonicum (Blood fluke).